Consider the following 206-residue polypeptide: Urease accessory protein UreG (206 aa).

13–20 (GPVGSGKT) is a binding site for GTP.

The protein belongs to the SIMIBI class G3E GTPase family. UreG subfamily. In terms of assembly, homodimer. UreD, UreF and UreG form a complex that acts as a GTP-hydrolysis-dependent molecular chaperone, activating the urease apoprotein by helping to assemble the nickel containing metallocenter of UreC. The UreE protein probably delivers the nickel.

The protein localises to the cytoplasm. Its function is as follows. Facilitates the functional incorporation of the urease nickel metallocenter. This process requires GTP hydrolysis, probably effectuated by UreG. This is Urease accessory protein UreG from Natronomonas pharaonis (strain ATCC 35678 / DSM 2160 / CIP 103997 / JCM 8858 / NBRC 14720 / NCIMB 2260 / Gabara) (Halobacterium pharaonis).